The primary structure comprises 658 residues: Probable CoA ligase CCL6 (658 aa).

Residues 226-234 (TSGATGEPK), 411-416 (QGYGLT), aspartate 497, 509-512 (IIDR), and lysine 632 contribute to the ATP site. An SBD1 region spans residues 298–411 (DIRFLMDDLQ…RVTSCAALSQ (114 aa)). The segment at 412–477 (GYGLTESCGG…LRGTTLFSGY (66 aa)) is SBD2.

Belongs to the ATP-dependent AMP-binding enzyme family. In terms of tissue distribution, mostly expressed in glandular trichomes (lupulin glands) after flowering, and, to a lower extent, in stems, leaves, cones and flowers.

It localises to the cytoplasm. The protein resides in the cytosol. In Humulus lupulus (European hop), this protein is Probable CoA ligase CCL6.